The primary structure comprises 696 residues: Tensin-4 (696 aa).

The signal sequence occupies residues 1-14; the sequence is MSSSLLAGGHMVSL. 3 disordered regions span residues 157–246, 271–344, and 356–416; these read LDGP…RAPQ, SLPH…CPAS, and LING…KDMQ. Polar residues predominate over residues 192-203; sequence SSSNESLIFSGN. S230 bears the Phosphoserine mark. The span at 271–304 shows a compositional bias: low complexity; the sequence is SLPHSSLSSYPSSSRSLGSPASSSSSLHSLDRGS. Composition is skewed to polar residues over residues 326-344 and 372-397; these read QAVQ…CPAS and PGHQ…SPSK. In terms of domain architecture, SH2 spans 429–536; the sequence is WFKPSITREQ…ALPCKLTIPQ (108 aa). Residues 563-690 form the PTB domain; sequence CHTLYLSSVS…QVISLVTALL (128 aa).

The protein belongs to the PTEN phosphatase protein family. Interacts (via SH2 domain) with Rho GTPase-activating protein DLC1 (via C-terminus); the interaction is independent of DLC1 tyrosine phosphorylation. Interacts with integrin ITGB1; the interaction displaces tensin TNS3 from the ITGB1 cytoplasmic tail and promotes ITGB1 stability. Interacts (via SH2 domain) with E3 ubiquitin-protein ligase CBL (phosphorylated on 'Tyr-780'); the interaction is enhanced in the presence of EGF and reduces interaction of CBL with EGFR. Interacts (via SH2 domain) with receptor tyrosine kinase MET (when phosphorylated); the interaction increases MET protein stability.

It localises to the cell junction. It is found in the focal adhesion. The protein localises to the cytoplasm. The protein resides in the cytoskeleton. In terms of biological role, promotes EGF-induced cell migration by displacing tensin TNS3 from the cytoplasmic tail of integrin ITGB1 which results in dissociation of TNS3 from focal adhesions, disassembly of actin stress fibers and initiation of cell migration. Suppresses ligand-induced degradation of EGFR by reducing EGFR ubiquitination in the presence of EGF. Increases MET protein stability by inhibiting MET endocytosis and subsequent lysosomal degradation which leads to increased cell survival, proliferation and migration. The sequence is that of Tensin-4 (Tns4) from Mus musculus (Mouse).